The following is a 222-amino-acid chain: Deoxyribose-phosphate aldolase (222 aa).

Aspartate 93 functions as the Proton donor/acceptor in the catalytic mechanism. Lysine 156 acts as the Schiff-base intermediate with acetaldehyde in catalysis. The Proton donor/acceptor role is filled by lysine 186.

Belongs to the DeoC/FbaB aldolase family. DeoC type 1 subfamily.

Its subcellular location is the cytoplasm. The enzyme catalyses 2-deoxy-D-ribose 5-phosphate = D-glyceraldehyde 3-phosphate + acetaldehyde. Its pathway is carbohydrate degradation; 2-deoxy-D-ribose 1-phosphate degradation; D-glyceraldehyde 3-phosphate and acetaldehyde from 2-deoxy-alpha-D-ribose 1-phosphate: step 2/2. Catalyzes a reversible aldol reaction between acetaldehyde and D-glyceraldehyde 3-phosphate to generate 2-deoxy-D-ribose 5-phosphate. The protein is Deoxyribose-phosphate aldolase of Nocardia farcinica (strain IFM 10152).